We begin with the raw amino-acid sequence, 153 residues long: Type II secretion system core protein G (153 aa).

Residues methionine 1–glycine 7 constitute a propeptide, leader sequence. Phenylalanine 8 is subject to N-methylphenylalanine. The chain crosses the membrane as a helical span at residues phenylalanine 8–valine 28. Disordered regions lie at residues glutamate 68–glycine 91 and methionine 126–proline 153. The segment covering glycine 134 to histidine 143 has biased composition (low complexity). Over residues asparagine 144–proline 153 the composition is skewed to gly residues.

It belongs to the GSP G family. In terms of assembly, type II secretion system is composed of four main components: the outer membrane complex, the inner membrane complex, the cytoplasmic secretion ATPase and the periplasm-spanning pseudopilus. Forms homomultimers. In terms of processing, cleaved by the prepilin peptidase. Methylated by prepilin peptidase at the amino group of the N-terminal phenylalanine once the leader sequence is cleaved.

The protein localises to the cell inner membrane. Functionally, core component of the type II secretion system required for the energy-dependent secretion of extracellular factors such as proteases and toxins from the periplasm. Pseudopilin (pilin-like) protein that polymerizes to form the pseudopilus. Further polymerization triggers pseudopilus growth. In Dickeya chrysanthemi (Pectobacterium chrysanthemi), this protein is Type II secretion system core protein G (outG).